The primary structure comprises 360 residues: SUN domain-containing protein 3 (360 aa).

Residues Met1–Ser10 are compositionally biased toward polar residues. Positions Met1 to Ala39 are disordered. The Nuclear segment spans residues Met1 to Lys47. A helical membrane pass occupies residues Ala48–Met67. The Perinuclear space portion of the chain corresponds to Lys68–Ser360. Positions Lys103–Asp142 form a coiled coil. The 162-residue stretch at Gly196–Lys357 folds into the SUN domain.

As to quaternary structure, self-associates. Interacts with SYNE1 and SPAG4/SUN4. Proposed to form a spermatogenesis-specific LINC complex with SYNE1 during sperm head formation possibly implicating a SUN domain-based heterotrimer with SPAG4/SUN4 associating with SYNE1.

It is found in the membrane. Its subcellular location is the nucleus envelope. The protein resides in the nucleus inner membrane. As a probable component of the LINC (LInker of Nucleoskeleton and Cytoskeleton) complex, involved in the connection between the nuclear lamina and the cytoskeleton. The nucleocytoplasmic interactions established by the LINC complex play an important role in the transmission of mechanical forces across the nuclear envelope and in nuclear movement and positioning. May be involved in nuclear remodeling during sperm head formation in spermatogenesis. A probable SUN3:SYNE1 LINC complex may tether spermatid nuclei to posterior cytoskeletal structures such as the manchette. This chain is SUN domain-containing protein 3 (SUN3), found in Bos taurus (Bovine).